The following is a 144-amino-acid chain: Large ribosomal subunit protein uL15 (144 aa).

The disordered stretch occupies residues 1–52 (MRLNTLSPAEGAKHAPKRVGRGIGSGLGKTAGRGHKGQNSRSGGGVRRGFEG). Residues 21 to 31 (RGIGSGLGKTA) show a composition bias toward gly residues.

It belongs to the universal ribosomal protein uL15 family. In terms of assembly, part of the 50S ribosomal subunit.

Its function is as follows. Binds to the 23S rRNA. In Yersinia enterocolitica serotype O:8 / biotype 1B (strain NCTC 13174 / 8081), this protein is Large ribosomal subunit protein uL15.